We begin with the raw amino-acid sequence, 189 residues long: HTH-type transcriptional repressor LfrR (189 aa).

In terms of domain architecture, HTH tetR-type spans 12-70; it reads ERTRRAILDAAMLVLADHPTAALGDIAAAAGVGRSTVHRYYPERTDLLRALARHVHDLS. The H-T-H motif DNA-binding region spans 33–52; the sequence is ALGDIAAAAGVGRSTVHRYY. The interval 70 to 71 is proflavine binding; it reads SN.

Homodimer. Forms a structurally asymmetric homodimer exhibiting local unfolding and a blocked drug-binding site.

Repressor activity is regulated by binding of different substrates of the LfrA multidrug efflux pump, such as acriflavine, proflavine, ethidium bromide and rhodamine 123. Binding of these ligands causes the dissociation of LfrR from the promoter, inducing lfrA expression. In terms of biological role, represses the transcription of the lfrRA operon by binding directly to the promoter region of lfrR-lfrA. Binds specifically to a 143-bp region upstream of the lfrR gene. This Mycolicibacterium smegmatis (strain ATCC 700084 / mc(2)155) (Mycobacterium smegmatis) protein is HTH-type transcriptional repressor LfrR.